The chain runs to 158 residues: Transcriptional regulatory protein DoeX (158 aa).

One can recognise an HTH asnC-type domain in the interval 3-64 (LDRYDLKILE…RLNTDVLVKR (62 aa)). The H-T-H motif DNA-binding region spans 22-41 (KSKLAEAINLSVSPCWERVR).

It localises to the cytoplasm. Acts as a transcriptional regulator. It binds DNA specifically to a fragment from the doeA promoter region. The polypeptide is Transcriptional regulatory protein DoeX (doeX) (Halomonas elongata (strain ATCC 33173 / DSM 2581 / NBRC 15536 / NCIMB 2198 / 1H9)).